Reading from the N-terminus, the 34-residue chain is Cytochrome b6-f complex subunit 5 (34 aa).

Residues 5–25 (LLSGIVLGLVPVTLAGLFVTA) form a helical membrane-spanning segment.

This sequence belongs to the PetG family. The 4 large subunits of the cytochrome b6-f complex are cytochrome b6, subunit IV (17 kDa polypeptide, PetD), cytochrome f and the Rieske protein, while the 4 small subunits are PetG, PetL, PetM and PetN. The complex functions as a dimer.

The protein resides in the plastid. Its subcellular location is the chloroplast thylakoid membrane. Component of the cytochrome b6-f complex, which mediates electron transfer between photosystem II (PSII) and photosystem I (PSI), cyclic electron flow around PSI, and state transitions. PetG is required for either the stability or assembly of the cytochrome b6-f complex. This chain is Cytochrome b6-f complex subunit 5, found in Oltmannsiellopsis viridis (Marine flagellate).